Reading from the N-terminus, the 369-residue chain is MGNVCVGGSRMSHQVYSPDRADTPPRSERNTPDRRQRAAGDAERTQSMRLQQKINDLKPYVRHARGPIKAYGQAALDRASGKKTSVSFAELDATHLDAMVYIENQRNPGLNLKHFRDHKELIQALQSDGPSAFRAIFPQTCPETGQTLKHHVMADVRLHQGGAPTIIITEPAVIVGARYQQLQRHNLTLEDLSESGVPLSQVAIIETQAQKTSDDCVMYSLNYAIKAHKNAAQFDDIHHGLQHGTLSTESESRARTTLGALEASSSYSVMHEGAHAAFGADVLPVDFYKHGASLTQAKQLMKRPDGRMAGRVNSEGHSEAENLVQRNQAFRVKRRELLDDETPSNTQFSASIDGFRLQEIKRVLAEEQR.

A disordered region spans residues 1-46; the sequence is MGNVCVGGSRMSHQVYSPDRADTPPRSERNTPDRRQRAAGDAERTQ. Basic and acidic residues predominate over residues 19 to 46; sequence DRADTPPRSERNTPDRRQRAAGDAERTQ. 1D-myo-inositol hexakisphosphate contacts are provided by Arg-49, Lys-53, and Arg-106. Active-site residues include His-150 and Glu-170. A CoA-binding site is contributed by His-150. CoA is bound by residues Ala-177 and 211-212; that span reads KT. Cys-216 is an active-site residue. 1D-myo-inositol hexakisphosphate is bound by residues Asn-222, 226-229, and 289-290; these read KAHK and KH. Lys-289 carries the post-translational modification N6-acetyllysine; by autocatalysis. Residue 292–295 participates in CoA binding; that stretch reads ASLT. Residues 314–317 and Arg-326 each bind 1D-myo-inositol hexakisphosphate; that span reads SEGH. Residues 331 to 334 and 344 to 348 contribute to the CoA site; these read RVKR and SNTQF. The 1D-myo-inositol hexakisphosphate site is built by Gln-358 and Arg-362.

This sequence belongs to the acetyltransferase YopJ family. In terms of assembly, interacts with host plant JAZ proteins (e.g. Glycine max JAZ1 and Arabidospis thaliana TIFY10B/JAZ2, TIFY11A/JAZ5, TIFY11B/JAZ6, TIFY5A/JAZ8 and TIFY3B/JAZ12) and triggers their degradation. Binds directly to SZE1 and SZE2 at the host plasma membrane; this interaction with a complex made of, at least, SZE1, BKN2/SZE2, ZAR1 and ZED1 triggers host immunity. The cofactor is 1D-myo-inositol hexakisphosphate. Autoacetylated at Lys-289; while autoacetylation at Lys-289 is required for virulence function to some extent, it is not essential.

The protein localises to the secreted. It localises to the host cell membrane. The protein resides in the host cytoplasm. It is found in the host cytoskeleton. Its subcellular location is the host nucleus. It catalyses the reaction L-threonyl-[protein] + acetyl-CoA = O-acetyl-L-threonyl-[protein] + CoA. It carries out the reaction L-seryl-[protein] + acetyl-CoA = O-acetyl-L-seryl-[protein] + CoA. The enzyme catalyses L-lysyl-[protein] + acetyl-CoA = N(6)-acetyl-L-lysyl-[protein] + CoA + H(+). 1D-myo-inositol hexakisphosphate activates protein-acetyltransferase activity via an allosteric mechanism: 1D-myo-inositol hexakisphosphate-binding induces a conformational rearrangement that stimulates the interaction with acetyl-CoA. Acetyltransferase activity is activated by phytic acid. Serine/threonine-protein acetyltransferase translocated into infected cells, which impairs host microtubule network and host immunity by mediating acetylation of target proteins. Blocks secretion in host cells by mediating acetylation of host tubulin, thereby impairing host microbubule network. Impairs host cell immunity by mediating acetylation of host TIFY/JAZ transcription repressors (Arabidopsis thaliana TIFY10B/JAZ2, TIFY11A/JAZ5, TIFY11B/JAZ6, TIFY5A/JAZ8, TIFY9/JAZ10 and TIFY3B/JAZ12), thereby activating host jasmonate signaling. This is Serine/threonine-protein acetyltransferase HopZ1a from Pseudomonas syringae pv. syringae.